We begin with the raw amino-acid sequence, 216 residues long: Penicillin-binding protein activator LpoB (216 aa).

The first 20 residues, 1–20 (MIKNLSRYALVTAFALFLSG), serve as a signal peptide directing secretion. A lipid anchor (N-palmitoyl cysteine) is attached at Cys21. Cys21 is lipidated: S-diacylglycerol cysteine. The tract at residues 28-77 (QPAPVDEAKPGTEQPAQPTQPVPTVPSVPTVPAQPGPIEHPDQTSQPAPR) is disordered.

This sequence belongs to the LpoB family. As to quaternary structure, interacts with PBP1b.

The protein resides in the cell outer membrane. Functionally, regulator of peptidoglycan synthesis that is essential for the function of penicillin-binding protein 1B (PBP1b). The sequence is that of Penicillin-binding protein activator LpoB from Enterobacter sp. (strain 638).